A 346-amino-acid polypeptide reads, in one-letter code: tRNA N6-adenosine threonylcarbamoyltransferase (346 aa).

Residues His111 and His115 each coordinate Fe cation. Residues Leu134 to Gly138, Asp167, Gly180, Asp184, and Asn279 each bind substrate. Asp307 is a Fe cation binding site.

The protein belongs to the KAE1 / TsaD family. Fe(2+) serves as cofactor.

It is found in the cytoplasm. The catalysed reaction is L-threonylcarbamoyladenylate + adenosine(37) in tRNA = N(6)-L-threonylcarbamoyladenosine(37) in tRNA + AMP + H(+). In terms of biological role, required for the formation of a threonylcarbamoyl group on adenosine at position 37 (t(6)A37) in tRNAs that read codons beginning with adenine. Is involved in the transfer of the threonylcarbamoyl moiety of threonylcarbamoyl-AMP (TC-AMP) to the N6 group of A37, together with TsaE and TsaB. TsaD likely plays a direct catalytic role in this reaction. In Trichormus variabilis (strain ATCC 29413 / PCC 7937) (Anabaena variabilis), this protein is tRNA N6-adenosine threonylcarbamoyltransferase.